The primary structure comprises 229 residues: Prolactin (229 aa).

An N-terminal signal peptide occupies residues 1-30 (MDSKGSAQKGSRLLLLLVVSNLLLCQGVVS). Cys-34 and Cys-41 are disulfide-bonded. Residue Ser-56 is modified to Phosphoserine. Asn-61 carries N-linked (GlcNAc...) asparagine; partial glycosylation. Phosphoserine is present on residues Ser-64 and Ser-120. Intrachain disulfides connect Cys-88/Cys-204 and Cys-221/Cys-229.

The protein belongs to the somatotropin/prolactin family. In terms of assembly, interacts with PRLR.

The protein localises to the secreted. Functionally, prolactin acts primarily on the mammary gland by promoting lactation, mammogenesis, mitogenesis and osmoregulation. The protein is Prolactin (PRL) of Ovis aries (Sheep).